The chain runs to 200 residues: NADH-quinone oxidoreductase subunit B (200 aa).

The [4Fe-4S] cluster site is built by Cys-79, Cys-80, Cys-144, and Cys-174.

Belongs to the complex I 20 kDa subunit family. In terms of assembly, NDH-1 is composed of 14 different subunits. Subunits NuoB, C, D, E, F, and G constitute the peripheral sector of the complex. [4Fe-4S] cluster serves as cofactor.

The protein localises to the cell inner membrane. It catalyses the reaction a quinone + NADH + 5 H(+)(in) = a quinol + NAD(+) + 4 H(+)(out). NDH-1 shuttles electrons from NADH, via FMN and iron-sulfur (Fe-S) centers, to quinones in the respiratory chain. The immediate electron acceptor for the enzyme in this species is believed to be ubiquinone. Couples the redox reaction to proton translocation (for every two electrons transferred, four hydrogen ions are translocated across the cytoplasmic membrane), and thus conserves the redox energy in a proton gradient. The chain is NADH-quinone oxidoreductase subunit B from Caulobacter vibrioides (strain NA1000 / CB15N) (Caulobacter crescentus).